A 61-amino-acid chain; its full sequence is Metallothionein-1 (61 aa).

An N-acetylmethionine modification is found at Met-1. The segment at 1-29 (MDPNCSCSTGSTCTCSSSCGCKDCKCTSC) is beta. Residues Cys-5, Cys-7, Cys-13, Cys-15, Cys-19, Cys-21, Cys-24, Cys-26, Cys-29, Cys-33, Cys-34, Cys-36, Cys-37, Cys-41, Cys-44, Cys-48, Cys-50, Cys-57, Cys-59, and Cys-60 each coordinate a divalent metal cation. The alpha stretch occupies residues 30–61 (KKSCCSCCPVGCSKCAQGCVCKGASDKCTCCA).

This sequence belongs to the metallothionein superfamily. Type 1 family.

In terms of biological role, metallothioneins have a high content of cysteine residues that bind various heavy metals; these proteins are transcriptionally regulated by both heavy metals and glucocorticoids. This chain is Metallothionein-1 (MT1), found in Cricetulus griseus (Chinese hamster).